Reading from the N-terminus, the 746-residue chain is Polyribonucleotide nucleotidyltransferase (746 aa).

Mg(2+)-binding residues include D515 and D521. A KH domain is found at 581–640; that stretch reads PRVIAVKIPVDKIGEVIGPKGKMINQIQEDTGADISIEDDGTVYIGATNGPSADAARSAI. Residues 652 to 724 form the S1 motif domain; sequence GERYLGTVVK…DRGKLSLSPV (73 aa).

It belongs to the polyribonucleotide nucleotidyltransferase family. The cofactor is Mg(2+).

It is found in the cytoplasm. The enzyme catalyses RNA(n+1) + phosphate = RNA(n) + a ribonucleoside 5'-diphosphate. In terms of biological role, involved in mRNA degradation. Catalyzes the phosphorolysis of single-stranded polyribonucleotides processively in the 3'- to 5'-direction. The sequence is that of Polyribonucleotide nucleotidyltransferase from Renibacterium salmoninarum (strain ATCC 33209 / DSM 20767 / JCM 11484 / NBRC 15589 / NCIMB 2235).